Here is a 288-residue protein sequence, read N- to C-terminus: Proline iminopeptidase (288 aa).

Residues 27–274 (PVIVLHGGPG…SAHMPYIEEP (248 aa)) enclose the AB hydrolase-1 domain. The active-site Nucleophile is serine 101. The active site involves aspartate 240. The active-site Proton donor is the histidine 267.

Belongs to the peptidase S33 family. As to quaternary structure, monomer.

The protein localises to the cytoplasm. It catalyses the reaction Release of N-terminal proline from a peptide.. Its activity is regulated as follows. Completely inhibited by p-chloromercuribenzoate (PCMB) and heavy metal salts. Partially inhibited by proline and proline derivatives with proline as the amino terminus. Enzyme inactivated by PCMB is reactivated by incubation with 2-mercaptoethanol. In terms of biological role, releases the N-terminal proline from various substrates including at least dipeptides Pro-Pro, Pro-Gln, Pro-Trp and Pro-Tyr. Also acts on amides (Pro-beta NA) and oligopeptides including Pro-Leu-GlyNH2, Pro-Leu-Gly, Pro-Phe-Gly-Lys, Pro-Pro-Ala-OBut and Pro-Pro-Gly-(Pro-Pro-Gly)(4). Higher activity toward small peptides (up to three residues), but very low activity for longer peptides. Has no activity against p-nitrophenyl acetate, poly_L-proline, Met-Pro or amino acyl amides other than Pro-betaNA (Pyr-betaNA, Phe-betaNA, Cys-betaNA, Met-betaNA, Leu-betaNA, Ala-betaNA and Z-Gly-Pro-betaNA). The protein is Proline iminopeptidase (pip) of Heyndrickxia coagulans (Weizmannia coagulans).